Consider the following 362-residue polypeptide: Protein-glutamate methylesterase/protein-glutamine glutaminase (362 aa).

One can recognise a Response regulatory domain in the interval 10–127; the sequence is RVLVVDDSAF…SLNMHVARDE (118 aa). Asp61 carries the post-translational modification 4-aspartylphosphate. The CheB-type methylesterase domain maps to 173–362; that stretch reads RLPRRLVLIG…DAITRAVGEG (190 aa). Catalysis depends on residues Ser184, His211, and Asp304.

Belongs to the CheB family. Post-translationally, phosphorylated by CheA. Phosphorylation of the N-terminal regulatory domain activates the methylesterase activity.

It localises to the cytoplasm. It catalyses the reaction [protein]-L-glutamate 5-O-methyl ester + H2O = L-glutamyl-[protein] + methanol + H(+). It carries out the reaction L-glutaminyl-[protein] + H2O = L-glutamyl-[protein] + NH4(+). Involved in chemotaxis. Part of a chemotaxis signal transduction system that modulates chemotaxis in response to various stimuli. Catalyzes the demethylation of specific methylglutamate residues introduced into the chemoreceptors (methyl-accepting chemotaxis proteins or MCP) by CheR. Also mediates the irreversible deamidation of specific glutamine residues to glutamic acid. The sequence is that of Protein-glutamate methylesterase/protein-glutamine glutaminase from Symbiobacterium thermophilum (strain DSM 24528 / JCM 14929 / IAM 14863 / T).